A 194-amino-acid polypeptide reads, in one-letter code: Ancillary SecYEG translocon subunit (194 aa).

Residues 1 to 10 (MHLNKMKKVS) lie on the Cytoplasmic side of the membrane. A helical transmembrane segment spans residues 11 to 31 (LKTYLVLFFLIFFIFCSFWFI). At 32–194 (KPKEKKLKLE…INMKINEIKR (163 aa)) the chain is on the periplasmic side.

This sequence belongs to the YfgM family. In terms of assembly, interacts with the SecYEG translocon. Forms a complex with PpiD.

Its subcellular location is the cell inner membrane. Functionally, may mediate protein transfer from the SecYEG translocon to the periplasmic chaperone network via its periplasmic C-terminal region. This chain is Ancillary SecYEG translocon subunit, found in Buchnera aphidicola subsp. Schizaphis graminum (strain Sg).